Reading from the N-terminus, the 388-residue chain is 5-hydroxytryptamine receptor 4 (388 aa).

Residues 1 to 19 are Extracellular-facing; it reads MDKLDANVSSEEGFGSVEK. N-linked (GlcNAc...) asparagine glycosylation occurs at Asn-7. A helical membrane pass occupies residues 20-44; that stretch reads VVLLTFLSTVILMAILGNLLVMVAV. Residues 45-54 lie on the Cytoplasmic side of the membrane; it reads CWDRQLRKIK. The chain crosses the membrane as a helical span at residues 55–78; sequence TNYFIVSLAFADLLVSVLVMPFGA. Topologically, residues 79 to 92 are extracellular; the sequence is IELVQDIWIYGEVF. The helical transmembrane segment at 93-117 threads the bilayer; the sequence is CLVRTSLDVLLTTASIFHLCCISLD. A disulfide bridge links Cys-93 with Cys-184. Position 100 (Asp-100) interacts with serotonin. The Cytoplasmic segment spans residues 118–133; that stretch reads RYYAICCQPLVYRNKM. A helical transmembrane segment spans residues 134–157; sequence TPLRIALMLGGCWVIPTFISFLPI. Over 158–188 the chain is Extracellular; that stretch reads MQGWNNIGIIDLIEKRKFNQNSNSTYCVFMV. A helical membrane pass occupies residues 189 to 212; sequence NKPYAITCSVVAFYIPFLLMVLAY. The Cytoplasmic portion of the chain corresponds to 213-257; that stretch reads YRIYVTAKEHAHQIQMLQRAGASSESRPQSADQHSTHRMRTETKA. A helical membrane pass occupies residues 258 to 283; the sequence is AKTLCIIMGCFCLCWAPFFVTNIVDP. Residue Asn-279 participates in serotonin binding. Over 284 to 290 the chain is Extracellular; it reads FIDYTVP. The helical transmembrane segment at 291 to 314 threads the bilayer; that stretch reads GQVWTAFLWLGYINSGLNPFLYAF. Over 315–388 the chain is Cytoplasmic; sequence LNKSFRRAFL…PLVAAQPSDT (74 aa).

It belongs to the G-protein coupled receptor 1 family. As to quaternary structure, interacts (via C-terminus 330-346 AA) with GRK5; this interaction is promoted by 5-HT (serotonin). Interacts with MAGI2, MPP3, NHERF1 and SNX27 isoforms 1 and 2. Forms a complex including NHERF1 and EZR. In terms of assembly, interacts with PATJ, NOS1 and SEC23A. In terms of tissue distribution, expressed in ileum, brain, and atrium, but not in the ventricle. Mainly expressed in atria and cardiac ventricle. As to expression, expressed in all cardiovascular tissues analyzed.

The protein localises to the cell membrane. It localises to the endosome membrane. In terms of biological role, G-protein coupled receptor for 5-hydroxytryptamine (serotonin), a biogenic hormone that functions as a neurotransmitter, a hormone and a mitogen. Ligand binding causes a conformation change that triggers signaling via guanine nucleotide-binding proteins (G proteins) and modulates the activity of downstream effectors. HTR4 is coupled to G(s) G alpha proteins and mediates activation of adenylate cyclase activity. This is 5-hydroxytryptamine receptor 4 from Homo sapiens (Human).